The chain runs to 596 residues: ATP-dependent RNA helicase dbp3 (596 aa).

Residues 1–17 (MPKRTLEDTELNPRDNY) are compositionally biased toward basic and acidic residues. 2 disordered regions span residues 1–87 (MPKR…ESTS) and 115–139 (EEKV…QNGT). Basic residues predominate over residues 21-30 (SSKKSRKEKR). Residues 47 to 120 (IDIEVESKEA…KEGKEEKVDI (74 aa)) are a coiled coil. Positions 123–139 (STDSATPISVAPQQNGT) are enriched in polar residues. Residues 180–207 (IKFDYLPITDSAQRAPFKDFKAPTPIQA) carry the Q motif motif. In terms of domain architecture, Helicase ATP-binding spans 210–386 (WPFLLAGRDV…STFMTSPVKI (177 aa)). An ATP-binding site is contributed by 223–230 (AETGSGKT). The short motif at 332 to 335 (DEAD) is the DEAD box element. One can recognise a Helicase C-terminal domain in the interval 417 to 566 (RLMQLLKQYQ…PVPDELLKFG (150 aa)).

Belongs to the DEAD box helicase family. DDX5/DBP2 subfamily.

Its subcellular location is the nucleus. It localises to the nucleolus. It carries out the reaction ATP + H2O = ADP + phosphate + H(+). In terms of biological role, ATP-dependent RNA helicase required for 60S ribosomal subunit synthesis. Involved in efficient pre-rRNA processing, predominantly at site A3, which is necessary for the normal formation of 25S and 5.8S rRNAs. In Sclerotinia sclerotiorum (strain ATCC 18683 / 1980 / Ss-1) (White mold), this protein is ATP-dependent RNA helicase dbp3 (dbp3).